Reading from the N-terminus, the 420-residue chain is Histidine--tRNA ligase (420 aa).

Belongs to the class-II aminoacyl-tRNA synthetase family. As to quaternary structure, homodimer.

It is found in the cytoplasm. The catalysed reaction is tRNA(His) + L-histidine + ATP = L-histidyl-tRNA(His) + AMP + diphosphate + H(+). The chain is Histidine--tRNA ligase from Acholeplasma laidlawii (strain PG-8A).